The following is a 122-amino-acid chain: Ribonuclease P protein component (122 aa).

Belongs to the RnpA family. Consists of a catalytic RNA component (M1 or rnpB) and a protein subunit.

The catalysed reaction is Endonucleolytic cleavage of RNA, removing 5'-extranucleotides from tRNA precursor.. Its function is as follows. RNaseP catalyzes the removal of the 5'-leader sequence from pre-tRNA to produce the mature 5'-terminus. It can also cleave other RNA substrates such as 4.5S RNA. The protein component plays an auxiliary but essential role in vivo by binding to the 5'-leader sequence and broadening the substrate specificity of the ribozyme. The protein is Ribonuclease P protein component of Oenococcus oeni (strain ATCC BAA-331 / PSU-1).